A 456-amino-acid chain; its full sequence is Phosphomethylpyrimidine synthase (456 aa).

Substrate is bound by residues Asn-80, Met-109, Tyr-139, His-175, 195-197 (SRG), 236-239 (DSLR), and Glu-275. His-279 is a Zn(2+) binding site. A substrate-binding site is contributed by Tyr-302. Residue His-343 coordinates Zn(2+). Cys-423, Cys-426, and Cys-431 together coordinate [4Fe-4S] cluster.

It belongs to the ThiC family. It depends on [4Fe-4S] cluster as a cofactor.

It carries out the reaction 5-amino-1-(5-phospho-beta-D-ribosyl)imidazole + S-adenosyl-L-methionine = 4-amino-2-methyl-5-(phosphooxymethyl)pyrimidine + CO + 5'-deoxyadenosine + formate + L-methionine + 3 H(+). It functions in the pathway cofactor biosynthesis; thiamine diphosphate biosynthesis. Catalyzes the synthesis of the hydroxymethylpyrimidine phosphate (HMP-P) moiety of thiamine from aminoimidazole ribotide (AIR) in a radical S-adenosyl-L-methionine (SAM)-dependent reaction. This is Phosphomethylpyrimidine synthase from Prochlorococcus marinus (strain MIT 9215).